Here is a 567-residue protein sequence, read N- to C-terminus: Dihydroxy-acid dehydratase (567 aa).

Residue cysteine 52 participates in [2Fe-2S] cluster binding. Aspartate 84 is a Mg(2+) binding site. Cysteine 125 is a [2Fe-2S] cluster binding site. Positions 126 and 127 each coordinate Mg(2+). Position 127 is an N6-carboxylysine (lysine 127). Position 197 (cysteine 197) interacts with [2Fe-2S] cluster. Position 448 (glutamate 448) interacts with Mg(2+). Serine 474 serves as the catalytic Proton acceptor.

The protein belongs to the IlvD/Edd family. As to quaternary structure, homodimer. Requires [2Fe-2S] cluster as cofactor. The cofactor is Mg(2+).

The catalysed reaction is (2R)-2,3-dihydroxy-3-methylbutanoate = 3-methyl-2-oxobutanoate + H2O. It carries out the reaction (2R,3R)-2,3-dihydroxy-3-methylpentanoate = (S)-3-methyl-2-oxopentanoate + H2O. It functions in the pathway amino-acid biosynthesis; L-isoleucine biosynthesis; L-isoleucine from 2-oxobutanoate: step 3/4. Its pathway is amino-acid biosynthesis; L-valine biosynthesis; L-valine from pyruvate: step 3/4. Functionally, functions in the biosynthesis of branched-chain amino acids. Catalyzes the dehydration of (2R,3R)-2,3-dihydroxy-3-methylpentanoate (2,3-dihydroxy-3-methylvalerate) into 2-oxo-3-methylpentanoate (2-oxo-3-methylvalerate) and of (2R)-2,3-dihydroxy-3-methylbutanoate (2,3-dihydroxyisovalerate) into 2-oxo-3-methylbutanoate (2-oxoisovalerate), the penultimate precursor to L-isoleucine and L-valine, respectively. The chain is Dihydroxy-acid dehydratase from Streptococcus pneumoniae (strain CGSP14).